The following is a 629-amino-acid chain: 1-deoxy-D-xylulose-5-phosphate synthase (629 aa).

Thiamine diphosphate contacts are provided by residues His79 and 119–121 (SHA). Position 150 (Asp150) interacts with Mg(2+). Residues 151 to 152 (GS), Asn180, Tyr292, and Glu377 contribute to the thiamine diphosphate site. Asn180 provides a ligand contact to Mg(2+).

Belongs to the transketolase family. DXPS subfamily. Homodimer. Requires Mg(2+) as cofactor. It depends on thiamine diphosphate as a cofactor.

It catalyses the reaction D-glyceraldehyde 3-phosphate + pyruvate + H(+) = 1-deoxy-D-xylulose 5-phosphate + CO2. Its pathway is metabolic intermediate biosynthesis; 1-deoxy-D-xylulose 5-phosphate biosynthesis; 1-deoxy-D-xylulose 5-phosphate from D-glyceraldehyde 3-phosphate and pyruvate: step 1/1. Its function is as follows. Catalyzes the acyloin condensation reaction between C atoms 2 and 3 of pyruvate and glyceraldehyde 3-phosphate to yield 1-deoxy-D-xylulose-5-phosphate (DXP). This is 1-deoxy-D-xylulose-5-phosphate synthase from Tropheryma whipplei (strain TW08/27) (Whipple's bacillus).